Consider the following 235-residue polypeptide: Octanoyltransferase (235 aa).

The 177-residue stretch at P59–L235 folds into the BPL/LPL catalytic domain. Substrate is bound by residues R101–H108, S168–G170, and G181–S183. C199 (acyl-thioester intermediate) is an active-site residue.

This sequence belongs to the LipB family.

It is found in the cytoplasm. The catalysed reaction is octanoyl-[ACP] + L-lysyl-[protein] = N(6)-octanoyl-L-lysyl-[protein] + holo-[ACP] + H(+). The protein operates within protein modification; protein lipoylation via endogenous pathway; protein N(6)-(lipoyl)lysine from octanoyl-[acyl-carrier-protein]: step 1/2. Catalyzes the transfer of endogenously produced octanoic acid from octanoyl-acyl-carrier-protein onto the lipoyl domains of lipoate-dependent enzymes. Lipoyl-ACP can also act as a substrate although octanoyl-ACP is likely to be the physiological substrate. This is Octanoyltransferase from Prochlorococcus marinus (strain MIT 9211).